The sequence spans 184 residues: ATP synthase subunit b, chloroplastic (184 aa).

Residues 27–49 (LATNPINLSVVLGVLIFFGKGVL) form a helical membrane-spanning segment.

The protein belongs to the ATPase B chain family. As to quaternary structure, F-type ATPases have 2 components, F(1) - the catalytic core - and F(0) - the membrane proton channel. F(1) has five subunits: alpha(3), beta(3), gamma(1), delta(1), epsilon(1). F(0) has four main subunits: a(1), b(1), b'(1) and c(10-14). The alpha and beta chains form an alternating ring which encloses part of the gamma chain. F(1) is attached to F(0) by a central stalk formed by the gamma and epsilon chains, while a peripheral stalk is formed by the delta, b and b' chains.

It localises to the plastid. The protein resides in the chloroplast thylakoid membrane. Functionally, f(1)F(0) ATP synthase produces ATP from ADP in the presence of a proton or sodium gradient. F-type ATPases consist of two structural domains, F(1) containing the extramembraneous catalytic core and F(0) containing the membrane proton channel, linked together by a central stalk and a peripheral stalk. During catalysis, ATP synthesis in the catalytic domain of F(1) is coupled via a rotary mechanism of the central stalk subunits to proton translocation. In terms of biological role, component of the F(0) channel, it forms part of the peripheral stalk, linking F(1) to F(0). The sequence is that of ATP synthase subunit b, chloroplastic from Morus indica (Mulberry).